A 213-amino-acid polypeptide reads, in one-letter code: 5-methylthioribulose-1-phosphate/5-deoxyribulose-1-phosphate aldolase (213 aa).

Glu73 acts as the Proton donor/acceptor in catalysis. Glu73, His92, His94, and His155 together coordinate Co(2+).

It belongs to the aldolase class II family. Co(2+) is required as a cofactor.

It carries out the reaction 5-(methylsulfanyl)-D-ribulose 1-phosphate = 2-(methylsulfanyl)acetaldehyde + dihydroxyacetone phosphate. The enzyme catalyses 5-deoxy-D-ribulose 1-phosphate = dihydroxyacetone phosphate + acetaldehyde. It participates in amino-acid biosynthesis; L-methionine biosynthesis via salvage pathway. In terms of biological role, uses 5-methylthioribulose-1-phosphate to yield 2-(methylthio)acetaldehyde and dihydroxyacetone phosphate. Can also use 5-deoxyribulose 1-phosphate to yield acetaldehyde and dihydroxyacetone phosphate. Part of a bifunctional DHAP-shunt salvage pathway for SAM by-products. This is 5-methylthioribulose-1-phosphate/5-deoxyribulose-1-phosphate aldolase from Escherichia coli O45:K1 (strain S88 / ExPEC).